A 712-amino-acid chain; its full sequence is Eukaryotic peptide chain release factor GTP-binding subunit (712 aa).

The span at 1 to 23 (MSNPQDQLSNDLANASISGDQSK) shows a compositional bias: polar residues. Disordered stretches follow at residues 1–64 (MSNP…QYGG), 76–115 (GYQQNYNNRGGYQQNYNNRGGYQQNYNNRGGYQQQQQQQY), 132–162 (PQQQQQQQTQSQGMSLADFQKQKAEQQASLN), and 184–256 (TKKV…APVS). Residues 16 to 143 (SISGDQSKQP…QQQQQQTQSQ (128 aa)) are several sort of repeats. Composition is skewed to low complexity over residues 24-35 (QPQQQQPQQQQP) and 48-64 (TGGYQQFQPQQQQQYGG). 2 stretches are compositionally biased toward low complexity: residues 132–141 (PQQQQQQQTQ) and 190–201 (AKPAASKEASPA). The charged stretch occupies residues 144 to 282 (GMSLADFQKQ…DEVDEEVVKD (139 aa)). Positions 202–217 (PKDEEASAEPEAKKES) are enriched in basic and acidic residues. Positions 218-256 (TPVPASSSPAPAAADSTPAPVKKESTPTPSVASKSAPVS) are enriched in low complexity. The 226-residue stretch at 287–512 (KDHVSIIFMG…YLDNMDTMNR (226 aa)) folds into the tr-type G domain. A G1 region spans residues 296-303 (GHVDAGKS). GTP is bound at residue 296-303 (GHVDAGKS). The G2 stretch occupies residues 352 to 356 (GKTIE). Position 370 is a phosphothreonine (Thr-370). The segment at 373–376 (DAPG) is G3. GTP contacts are provided by residues 373 to 377 (DAPGH) and 435 to 438 (NKMD). Residues 435-438 (NKMD) form a G4 region. The tract at residues 476–478 (SGY) is G5.

Belongs to the TRAFAC class translation factor GTPase superfamily. Classic translation factor GTPase family. ERF3 subfamily.

The protein localises to the cytoplasm. Functionally, involved in translation termination. Stimulates the activity of ERF1. Binds guanine nucleotides. In Candida maltosa (Yeast), this protein is Eukaryotic peptide chain release factor GTP-binding subunit (SUP35).